The sequence spans 273 residues: Probable ribosomal RNA small subunit methyltransferase A (273 aa).

Positions 23, 25, 50, 71, 95, and 110 each coordinate S-adenosyl-L-methionine.

The protein belongs to the class I-like SAM-binding methyltransferase superfamily. rRNA adenine N(6)-methyltransferase family. RsmA subfamily.

Its subcellular location is the cytoplasm. Specifically dimethylates two adjacent adenosines in the loop of a conserved hairpin near the 3'-end of 16S rRNA in the 30S particle. May play a critical role in biogenesis of 30S subunits. This chain is Probable ribosomal RNA small subunit methyltransferase A, found in Pyrococcus furiosus (strain ATCC 43587 / DSM 3638 / JCM 8422 / Vc1).